The primary structure comprises 302 residues: Protein FdhE homolog (302 aa).

This sequence belongs to the FdhE family.

The protein resides in the cytoplasm. In terms of biological role, necessary for formate dehydrogenase activity. The chain is Protein FdhE homolog from Shewanella oneidensis (strain ATCC 700550 / JCM 31522 / CIP 106686 / LMG 19005 / NCIMB 14063 / MR-1).